Reading from the N-terminus, the 273-residue chain is Putative phosphoenolpyruvate synthase regulatory protein (273 aa).

154-161 (GVSRSGKT) serves as a coordination point for ADP.

It belongs to the pyruvate, phosphate/water dikinase regulatory protein family. PSRP subfamily.

The catalysed reaction is [pyruvate, water dikinase] + ADP = [pyruvate, water dikinase]-phosphate + AMP + H(+). It carries out the reaction [pyruvate, water dikinase]-phosphate + phosphate + H(+) = [pyruvate, water dikinase] + diphosphate. Functionally, bifunctional serine/threonine kinase and phosphorylase involved in the regulation of the phosphoenolpyruvate synthase (PEPS) by catalyzing its phosphorylation/dephosphorylation. This is Putative phosphoenolpyruvate synthase regulatory protein from Halorhodospira halophila (strain DSM 244 / SL1) (Ectothiorhodospira halophila (strain DSM 244 / SL1)).